A 533-amino-acid chain; its full sequence is Beta-apo-4'-carotenal oxygenase (533 aa).

Catalysis depends on residues E226 and C260.

Belongs to the aldehyde dehydrogenase family.

It carries out the reaction 4'-apo-beta-carotenal + NAD(+) + H2O = neurosporaxanthin + NADH + 2 H(+). In terms of biological role, beta-apo-4'-carotenal oxygenase involved in the last step of synthesis of neurosporaxanthin, a carboxylic apocarotenoid acting as an essential protective pigment and leading to orange pigmentation. Converts the aldehyde beta-apo-4'-carotenal into neurosporaxanthin. Neurosporaxanthin is synthesized from geranyl-geranyl pyrophosphate (GGPP) through several enzymatic activities. Phytoene synthase activity performed by the bifunctional enzyme al-2 first produces phytoene from geranyl-geranyl pyrophosphate (GGPP). The phytoene dehydrogenase al-1 then introduces 5 desaturations to lead to 3,4-didehydrolycopene via the intermediates phytofluene, zeta-carotene, neurosporene and lycopene. Al-2 cyclase activity then converts 3,4-didehydrolycopene into torulene. Al-2 can also convet lycopene into gamma-carotene which in turn is converted to beta-carotene by an additional al-2 cyclization reaction. Torulene is the substrate of the dioxidase cao-2 that breaks the molecule, removing five carbon atoms to yield beta-apo-4'-carotenal, whereas the aldehyde dehydrogenase ylo-1 mediates the last step by converting beta-apo-4'-carotenal into neurosporaxanthin. This Neurospora crassa (strain ATCC 24698 / 74-OR23-1A / CBS 708.71 / DSM 1257 / FGSC 987) protein is Beta-apo-4'-carotenal oxygenase.